Here is a 526-residue protein sequence, read N- to C-terminus: Bifunctional purine biosynthesis protein PurH (526 aa).

The region spanning 1–147 (MSVIKRALIS…KNWKHVAIVT (147 aa)) is the MGS-like domain.

Belongs to the PurH family.

It catalyses the reaction (6R)-10-formyltetrahydrofolate + 5-amino-1-(5-phospho-beta-D-ribosyl)imidazole-4-carboxamide = 5-formamido-1-(5-phospho-D-ribosyl)imidazole-4-carboxamide + (6S)-5,6,7,8-tetrahydrofolate. The enzyme catalyses IMP + H2O = 5-formamido-1-(5-phospho-D-ribosyl)imidazole-4-carboxamide. It participates in purine metabolism; IMP biosynthesis via de novo pathway; 5-formamido-1-(5-phospho-D-ribosyl)imidazole-4-carboxamide from 5-amino-1-(5-phospho-D-ribosyl)imidazole-4-carboxamide (10-formyl THF route): step 1/1. It functions in the pathway purine metabolism; IMP biosynthesis via de novo pathway; IMP from 5-formamido-1-(5-phospho-D-ribosyl)imidazole-4-carboxamide: step 1/1. This is Bifunctional purine biosynthesis protein PurH from Neisseria gonorrhoeae (strain NCCP11945).